The following is a 168-amino-acid chain: Transmembrane protein 229b (168 aa).

Over 1–14 (MAPPEPLTALSRWY) the chain is Cytoplasmic. The helical transmembrane segment at 15 to 35 (LYAIHGYFCEVMFTAAWDFVV) threads the bilayer. The Extracellular portion of the chain corresponds to 36-40 (NYNWK). The chain crosses the membrane as a helical span at residues 41 to 61 (FPGVTSVWALFIYGTSILIVE). The Cytoplasmic segment spans residues 62–72 (KMYLYLKDKCN). Residues 73–93 (ILIRCLIYTLWTYIWEFSTGL) form a helical membrane-spanning segment. Topologically, residues 94 to 109 (ILRQFNACPWDYSQFD) are extracellular. Residues 110–130 (FDFMGLITLEYAIPWFCASFI) form a helical membrane-spanning segment. Residues 131-168 (MEQLVIRNTLRLRFDEHAEPGSPVMSTVSMANGHVKCN) are Cytoplasmic-facing.

It belongs to the TMEM229 family.

The protein localises to the membrane. The sequence is that of Transmembrane protein 229b (tmem229b) from Xenopus tropicalis (Western clawed frog).